A 252-amino-acid polypeptide reads, in one-letter code: Ribonuclease 3 (252 aa).

The region spanning 3-125 (LATLETRLDH…IFGAAFLDGG (123 aa)) is the RNase III domain. Mg(2+) is bound at residue Glu38. Asp42 is a catalytic residue. Mg(2+) is bound by residues Asp111 and Glu114. Residue Glu114 is part of the active site. Positions 152-222 (DAKTLLQEFL…AKLALEAAQA (71 aa)) constitute a DRBM domain.

It belongs to the ribonuclease III family. As to quaternary structure, homodimer. Requires Mg(2+) as cofactor.

The protein localises to the cytoplasm. It catalyses the reaction Endonucleolytic cleavage to 5'-phosphomonoester.. In terms of biological role, digests double-stranded RNA. Involved in the processing of primary rRNA transcript to yield the immediate precursors to the large and small rRNAs (23S and 16S). Processes some mRNAs, and tRNAs when they are encoded in the rRNA operon. Processes pre-crRNA and tracrRNA of type II CRISPR loci if present in the organism. This is Ribonuclease 3 from Bordetella petrii (strain ATCC BAA-461 / DSM 12804 / CCUG 43448).